Consider the following 352-residue polypeptide: Neutral protease 2 (352 aa).

Positions 1–19 are cleaved as a signal peptide; that stretch reads MRVTTLSTALFALASTAVS. Residues 20-175 constitute a propeptide that is removed on maturation; that stretch reads APTAGSSSPG…TKALSQLTRR (156 aa). Cystine bridges form between Cys-181-Cys-253, Cys-260-Cys-278, and Cys-292-Cys-352. His-303 lines the Zn(2+) pocket. Residue Glu-304 is part of the active site. Zn(2+)-binding residues include His-307 and Asp-318.

Belongs to the peptidase M35 family. The cofactor is Zn(2+).

The enzyme catalyses Preferential cleavage of bonds with hydrophobic residues in P1'. Also 3-Asn-|-Gln-4 and 8-Gly-|-Ser-9 bonds in insulin B chain.. In terms of biological role, metalloprotease that shows high activities on basic nuclear substrates such as histone and protamine. This is Neutral protease 2 from Aspergillus oryzae (strain ATCC 42149 / RIB 40) (Yellow koji mold).